Here is a 128-residue protein sequence, read N- to C-terminus: Probable 4-amino-4-deoxy-L-arabinose-phosphoundecaprenol flippase subunit ArnF (128 aa).

Residues 1–2 (MG) are Cytoplasmic-facing. The chain crosses the membrane as a helical span at residues 3–23 (LIWGLFSVIIASVAQLSLGFA). Residues 24–35 (ASHLPPMTHLWD) lie on the Periplasmic side of the membrane. Residues 36–56 (FIAALLAFGLDARILLLGLLG) traverse the membrane as a helical segment. Topologically, residues 57-76 (YLLSVFCWYKTLHKLALSKA) are cytoplasmic. Residues 77–97 (YALLSMSYVLVWIASMVLPGW) form a helical membrane-spanning segment. Residues 98-100 (EGT) lie on the Periplasmic side of the membrane. The helical transmembrane segment at 101–121 (FSLKALLGVACIMSGLMLIFL) threads the bilayer. The Cytoplasmic portion of the chain corresponds to 122–128 (PMTKQRY).

This sequence belongs to the ArnF family. Heterodimer of ArnE and ArnF.

It is found in the cell inner membrane. It participates in bacterial outer membrane biogenesis; lipopolysaccharide biosynthesis. Functionally, translocates 4-amino-4-deoxy-L-arabinose-phosphoundecaprenol (alpha-L-Ara4N-phosphoundecaprenol) from the cytoplasmic to the periplasmic side of the inner membrane. The protein is Probable 4-amino-4-deoxy-L-arabinose-phosphoundecaprenol flippase subunit ArnF of Escherichia coli O9:H4 (strain HS).